Reading from the N-terminus, the 235-residue chain is Glucosamine-6-phosphate deaminase (235 aa).

Residue aspartate 62 is the Proton acceptor; for enolization step of the active site. The active-site For ring-opening step is the asparagine 128. Histidine 130 serves as the catalytic Proton acceptor; for ring-opening step. The For ring-opening step role is filled by glutamate 135.

Belongs to the glucosamine/galactosamine-6-phosphate isomerase family. NagB subfamily.

It catalyses the reaction alpha-D-glucosamine 6-phosphate + H2O = beta-D-fructose 6-phosphate + NH4(+). It participates in amino-sugar metabolism; N-acetylneuraminate degradation; D-fructose 6-phosphate from N-acetylneuraminate: step 5/5. In terms of biological role, catalyzes the reversible isomerization-deamination of glucosamine 6-phosphate (GlcN6P) to form fructose 6-phosphate (Fru6P) and ammonium ion. This Streptococcus sanguinis (strain SK36) protein is Glucosamine-6-phosphate deaminase.